Consider the following 160-residue polypeptide: Crossover junction endodeoxyribonuclease RuvC (160 aa).

Residues Asp-9, Glu-68, and Asp-141 contribute to the active site. Mg(2+) contacts are provided by Asp-9, Glu-68, and Asp-141.

The protein belongs to the RuvC family. In terms of assembly, homodimer which binds Holliday junction (HJ) DNA. The HJ becomes 2-fold symmetrical on binding to RuvC with unstacked arms; it has a different conformation from HJ DNA in complex with RuvA. In the full resolvosome a probable DNA-RuvA(4)-RuvB(12)-RuvC(2) complex forms which resolves the HJ. Mg(2+) serves as cofactor.

The protein resides in the cytoplasm. It carries out the reaction Endonucleolytic cleavage at a junction such as a reciprocal single-stranded crossover between two homologous DNA duplexes (Holliday junction).. The RuvA-RuvB-RuvC complex processes Holliday junction (HJ) DNA during genetic recombination and DNA repair. Endonuclease that resolves HJ intermediates. Cleaves cruciform DNA by making single-stranded nicks across the HJ at symmetrical positions within the homologous arms, yielding a 5'-phosphate and a 3'-hydroxyl group; requires a central core of homology in the junction. The consensus cleavage sequence is 5'-(A/T)TT(C/G)-3'. Cleavage occurs on the 3'-side of the TT dinucleotide at the point of strand exchange. HJ branch migration catalyzed by RuvA-RuvB allows RuvC to scan DNA until it finds its consensus sequence, where it cleaves and resolves the cruciform DNA. The chain is Crossover junction endodeoxyribonuclease RuvC from Campylobacter jejuni (strain RM1221).